Here is a 440-residue protein sequence, read N- to C-terminus: Probable secretory pathway GDP dissociation inhibitor 1 (440 aa).

Belongs to the Rab GDI family.

The chain is Probable secretory pathway GDP dissociation inhibitor 1 (gdi1) from Schizosaccharomyces pombe (strain 972 / ATCC 24843) (Fission yeast).